We begin with the raw amino-acid sequence, 165 residues long: Phosphopantetheine adenylyltransferase (165 aa).

S10 serves as a coordination point for substrate. Residues S10–F11 and H18 contribute to the ATP site. K42, S79, and R93 together coordinate substrate. Residues G94 to R96, E104, and V129 to T135 contribute to the ATP site.

This sequence belongs to the bacterial CoaD family. Homohexamer. Mg(2+) serves as cofactor.

It localises to the cytoplasm. The catalysed reaction is (R)-4'-phosphopantetheine + ATP + H(+) = 3'-dephospho-CoA + diphosphate. It functions in the pathway cofactor biosynthesis; coenzyme A biosynthesis; CoA from (R)-pantothenate: step 4/5. In terms of biological role, reversibly transfers an adenylyl group from ATP to 4'-phosphopantetheine, yielding dephospho-CoA (dPCoA) and pyrophosphate. In Bradyrhizobium diazoefficiens (strain JCM 10833 / BCRC 13528 / IAM 13628 / NBRC 14792 / USDA 110), this protein is Phosphopantetheine adenylyltransferase.